The primary structure comprises 140 residues: Profilin (140 aa).

Ser2 is subject to N-acetylserine.

The protein belongs to the profilin family. In terms of assembly, occurs in many kinds of cells as a complex with monomeric actin in a 1:1 ratio.

It localises to the cytoplasm. The protein resides in the cytoskeleton. In terms of biological role, binds to actin and affects the structure of the cytoskeleton. At high concentrations, profilin prevents the polymerization of actin, whereas it enhances it at low concentrations. By binding to PIP2, it inhibits the formation of IP3 and DG. In Clypeaster japonicus (Sand dollar), this protein is Profilin.